We begin with the raw amino-acid sequence, 193 residues long: Large ribosomal subunit protein uL18 (193 aa).

The protein belongs to the universal ribosomal protein uL18 family. Part of the 50S ribosomal subunit. Contacts the 5S and 23S rRNAs.

Its function is as follows. This is one of the proteins that bind and probably mediate the attachment of the 5S RNA into the large ribosomal subunit, where it forms part of the central protuberance. In Methanococcus maripaludis (strain C6 / ATCC BAA-1332), this protein is Large ribosomal subunit protein uL18.